Here is a 360-residue protein sequence, read N- to C-terminus: MNSSSLFGIWLSVPLILSWVTPQVSSSWWYMRAVGSSRVMCDNVPGLVSRQRQLCHRHPEVMRSIGLGVAEWTAECQHQFRQHRWNCHTLDRDHNLFGKVLLRSSREAAFVYAISSAGVVFAITRACSQGELKSCSCDPKKKGTSKDSKGTFDWGGCSDNIDYGIKFARAFVDAKERKGKDARALMNLHNNRAGRKAVKRFLKQECKCHGVSGSCTLRTCWLAMADFRKTGDYLWKKYNGAIQVVMNQDGTGFTVANKRFKKPTKNDLVYFENSPDYCIRDRDAGSLGTAGRVCNLTSRGMDSCEVMCCGRGYDTSRVTRMTKCECKFHWCCAVRCQDCLEVVDVHTCKAPKSPDWVAPT.

Residues 1 to 26 (MNSSSLFGIWLSVPLILSWVTPQVSS) form the signal peptide. Disulfide bonds link Cys-76/Cys-87, Cys-127/Cys-135, Cys-137/Cys-157, Cys-206/Cys-220, Cys-208/Cys-215, Cys-278/Cys-309, Cys-294/Cys-304, Cys-308/Cys-348, Cys-324/Cys-339, Cys-326/Cys-336, and Cys-331/Cys-332. Ser-212 is lipidated: O-palmitoleoyl serine; by PORCN. N-linked (GlcNAc...) asparagine glycosylation is present at Asn-295.

It belongs to the Wnt family. Palmitoleoylation is required for efficient binding to frizzled receptors. Depalmitoleoylation leads to Wnt signaling pathway inhibition.

The protein resides in the secreted. It is found in the extracellular space. It localises to the extracellular matrix. Functionally, ligand for members of the frizzled family of seven transmembrane receptors. Functions in the canonical Wnt signaling pathway that results in activation of transcription factors of the TCF/LEF family. Functions as a upstream regulator of FGF10 expression. Plays an important role in embryonic lung development. May contribute to embryonic brain development by regulating the proliferation of dopaminergic precursors and neurons. The protein is Protein Wnt-2 (WNT2) of Monodelphis domestica (Gray short-tailed opossum).